Here is a 378-residue protein sequence, read N- to C-terminus: O-methyltransferase dpfgI (378 aa).

Residues 232-233 (GG), D257, 279-280 (NF), and R295 contribute to the S-adenosyl-L-methionine site. Residue H299 is the Proton acceptor of the active site.

It belongs to the class I-like SAM-binding methyltransferase superfamily. Cation-independent O-methyltransferase family.

Its pathway is secondary metabolite biosynthesis; terpenoid biosynthesis. In terms of biological role, O-methyltransferase; part of the gene cluster that mediates the biosynthesis of diterpenoid pyrones. The first step of the pathway is the synthesis of the alpha-pyrone moiety by the polyketide synthase dpfgA via condensation of one acetyl-CoA starter unit with 3 malonyl-CoA units and 2 methylations. The alpha-pyrone is then combined with geranylgeranyl pyrophosphate (GGPP) formed by the GGPP synthase dpfgD through the action of the prenyltransferase dpfgC to yield a linear alpha-pyrone diterpenoid. Subsequent steps in the diterpenoid pyrone biosynthetic pathway involve the decalin core formation, which is initiated by the epoxidation of the C10-C11 olefin by the FAD-dependent oxidoreductase dpfgE, and is followed by a cyclization cascade catalyzed by the terpene cyclase dpfgB. The short chain dehydrogenase/reductase dpfgG then oxidizes the 8S hydroxy group to a ketone and the short chain dehydrogenase/reductase dpfgH reduces the ketone to the 8R hydroxy group to yield higginsianin B. Higginsianin B is further methylated by the methyltransferase dpfgI to produce the intermediate named FDDP B. The cytochrome P450 monooxygenase dfgpJ then catalyzes a three-step oxidation at C-27 to generate a carboxylic acid as well as C-26 hydroxylation. Finally, methyltransferase dpfgK methylates the carboxylic acid generated by dpfgJ, yielding the final diterpenoid pyrones from the pathway which were named FDDP D and FDDP E. The sequence is that of O-methyltransferase dpfgI from Gibberella zeae (strain ATCC MYA-4620 / CBS 123657 / FGSC 9075 / NRRL 31084 / PH-1) (Wheat head blight fungus).